Reading from the N-terminus, the 191-residue chain is Hypoxanthine/guanine phosphoribosyltransferase (191 aa).

It belongs to the purine/pyrimidine phosphoribosyltransferase family. Archaeal HPRT subfamily. In terms of assembly, homodimer.

Its subcellular location is the cytoplasm. It carries out the reaction IMP + diphosphate = hypoxanthine + 5-phospho-alpha-D-ribose 1-diphosphate. It catalyses the reaction GMP + diphosphate = guanine + 5-phospho-alpha-D-ribose 1-diphosphate. It functions in the pathway purine metabolism; IMP biosynthesis via salvage pathway; IMP from hypoxanthine: step 1/1. Functionally, catalyzes a salvage reaction resulting in the formation of IMP that is energically less costly than de novo synthesis. The protein is Hypoxanthine/guanine phosphoribosyltransferase of Methanocella arvoryzae (strain DSM 22066 / NBRC 105507 / MRE50).